The primary structure comprises 355 residues: Peptide chain release factor 1 (355 aa).

At Q231 the chain carries N5-methylglutamine.

It belongs to the prokaryotic/mitochondrial release factor family. Post-translationally, methylated by PrmC. Methylation increases the termination efficiency of RF1.

Its subcellular location is the cytoplasm. Its function is as follows. Peptide chain release factor 1 directs the termination of translation in response to the peptide chain termination codons UAG and UAA. In Wolinella succinogenes (strain ATCC 29543 / DSM 1740 / CCUG 13145 / JCM 31913 / LMG 7466 / NCTC 11488 / FDC 602W) (Vibrio succinogenes), this protein is Peptide chain release factor 1.